A 342-amino-acid polypeptide reads, in one-letter code: N-acetyl-gamma-glutamyl-phosphate reductase (342 aa).

Cys156 is an active-site residue.

The protein belongs to the NAGSA dehydrogenase family. Type 1 subfamily.

It localises to the cytoplasm. The enzyme catalyses N-acetyl-L-glutamate 5-semialdehyde + phosphate + NADP(+) = N-acetyl-L-glutamyl 5-phosphate + NADPH + H(+). It participates in amino-acid biosynthesis; L-arginine biosynthesis; N(2)-acetyl-L-ornithine from L-glutamate: step 3/4. Its function is as follows. Catalyzes the NADPH-dependent reduction of N-acetyl-5-glutamyl phosphate to yield N-acetyl-L-glutamate 5-semialdehyde. This is N-acetyl-gamma-glutamyl-phosphate reductase from Pseudoalteromonas atlantica (strain T6c / ATCC BAA-1087).